A 446-amino-acid polypeptide reads, in one-letter code: Exodeoxyribonuclease 7 large subunit (446 aa).

The protein belongs to the XseA family. As to quaternary structure, heterooligomer composed of large and small subunits.

It is found in the cytoplasm. The catalysed reaction is Exonucleolytic cleavage in either 5'- to 3'- or 3'- to 5'-direction to yield nucleoside 5'-phosphates.. Bidirectionally degrades single-stranded DNA into large acid-insoluble oligonucleotides, which are then degraded further into small acid-soluble oligonucleotides. The polypeptide is Exodeoxyribonuclease 7 large subunit (Streptococcus pneumoniae serotype 4 (strain ATCC BAA-334 / TIGR4)).